Reading from the N-terminus, the 588-residue chain is Neopullulanase (588 aa).

Residues N147, N149, S153, G172, and D174 each contribute to the Ca(2+) site. H247 and R326 together coordinate substrate. The active-site Nucleophile is the D328. The Proton donor role is filled by E357. Substrate is bound by residues 423 to 424, D468, and R472; that span reads HD.

This sequence belongs to the glycosyl hydrolase 13 family. Homodimer. Ca(2+) serves as cofactor.

The enzyme catalyses Hydrolysis of pullulan to panose (6-alpha-D-glucosylmaltose).. In terms of biological role, hydrolyzes pullulan efficiently but only a small amount of starch. Endohydrolysis of 1,4-alpha-glucosidic linkages in pullulan to form panose. Also cleaves (1-6)-alpha-glucosidic linkages to form maltotriose. In Geobacillus stearothermophilus (Bacillus stearothermophilus), this protein is Neopullulanase (nplT).